The following is a 456-amino-acid chain: Bifunctional protein GlmU (456 aa).

The interval 1–228 (MSARLAAIVL…PQEIFGINDR (228 aa)) is pyrophosphorylase. UDP-N-acetyl-alpha-D-glucosamine-binding positions include 10-13 (LAAG), lysine 24, glutamine 75, and 80-81 (GT). Mg(2+) is bound at residue aspartate 105. Glycine 142, glutamate 157, asparagine 172, and asparagine 226 together coordinate UDP-N-acetyl-alpha-D-glucosamine. Asparagine 226 lines the Mg(2+) pocket. A linker region spans residues 229–249 (LQLSQASRILNERTLVGLMLS). The segment at 250 to 456 (GVTIVDPLRV…KAPYERTEDG (207 aa)) is N-acetyltransferase. UDP-N-acetyl-alpha-D-glucosamine contacts are provided by arginine 331 and lysine 349. Catalysis depends on histidine 361, which acts as the Proton acceptor. Tyrosine 364 and asparagine 375 together coordinate UDP-N-acetyl-alpha-D-glucosamine. Acetyl-CoA is bound by residues alanine 378, 384 to 385 (NY), alanine 421, and arginine 437.

In the N-terminal section; belongs to the N-acetylglucosamine-1-phosphate uridyltransferase family. The protein in the C-terminal section; belongs to the transferase hexapeptide repeat family. In terms of assembly, homotrimer. Mg(2+) serves as cofactor.

The protein localises to the cytoplasm. The catalysed reaction is alpha-D-glucosamine 1-phosphate + acetyl-CoA = N-acetyl-alpha-D-glucosamine 1-phosphate + CoA + H(+). It carries out the reaction N-acetyl-alpha-D-glucosamine 1-phosphate + UTP + H(+) = UDP-N-acetyl-alpha-D-glucosamine + diphosphate. It participates in nucleotide-sugar biosynthesis; UDP-N-acetyl-alpha-D-glucosamine biosynthesis; N-acetyl-alpha-D-glucosamine 1-phosphate from alpha-D-glucosamine 6-phosphate (route II): step 2/2. It functions in the pathway nucleotide-sugar biosynthesis; UDP-N-acetyl-alpha-D-glucosamine biosynthesis; UDP-N-acetyl-alpha-D-glucosamine from N-acetyl-alpha-D-glucosamine 1-phosphate: step 1/1. Its pathway is bacterial outer membrane biogenesis; LPS lipid A biosynthesis. In terms of biological role, catalyzes the last two sequential reactions in the de novo biosynthetic pathway for UDP-N-acetylglucosamine (UDP-GlcNAc). The C-terminal domain catalyzes the transfer of acetyl group from acetyl coenzyme A to glucosamine-1-phosphate (GlcN-1-P) to produce N-acetylglucosamine-1-phosphate (GlcNAc-1-P), which is converted into UDP-GlcNAc by the transfer of uridine 5-monophosphate (from uridine 5-triphosphate), a reaction catalyzed by the N-terminal domain. This chain is Bifunctional protein GlmU, found in Gloeobacter violaceus (strain ATCC 29082 / PCC 7421).